We begin with the raw amino-acid sequence, 880 residues long: Alanine--tRNA ligase (880 aa).

Zn(2+)-binding residues include H567, H571, C669, and H673.

It belongs to the class-II aminoacyl-tRNA synthetase family. The cofactor is Zn(2+).

It is found in the cytoplasm. It carries out the reaction tRNA(Ala) + L-alanine + ATP = L-alanyl-tRNA(Ala) + AMP + diphosphate. Its function is as follows. Catalyzes the attachment of alanine to tRNA(Ala) in a two-step reaction: alanine is first activated by ATP to form Ala-AMP and then transferred to the acceptor end of tRNA(Ala). Also edits incorrectly charged Ser-tRNA(Ala) and Gly-tRNA(Ala) via its editing domain. The chain is Alanine--tRNA ligase from Bacillus mycoides (strain KBAB4) (Bacillus weihenstephanensis).